The primary structure comprises 104 residues: uncharacterized protein (104 aa).

Transmembrane regions (helical) follow at residues 16–36 and 44–64; these read LAFF…LASY and GGFG…FLCI.

It localises to the cell membrane. This is an uncharacterized protein from Bacillus anthracis.